Here is a 74-residue protein sequence, read N- to C-terminus: Cytochrome c oxidase subunit 6C (74 aa).

Over 2 to 12 (STALAKPQMRG) the chain is Mitochondrial matrix. Residues 13 to 53 (LLARRLRFHIVGAFMVSLGFATFYKFAVAEKRKKAYADFYR) traverse the membrane as a helical segment. Over 54-74 (NYDSMKDFEEMRKAGIFQSAK) the chain is Mitochondrial intermembrane.

Belongs to the cytochrome c oxidase subunit 6c family. In terms of assembly, component of the cytochrome c oxidase (complex IV, CIV), a multisubunit enzyme composed of 14 subunits. The complex is composed of a catalytic core of 3 subunits MT-CO1, MT-CO2 and MT-CO3, encoded in the mitochondrial DNA, and 11 supernumerary subunits COX4I1 (or COX4I2), COX5A, COX5B, COX6A2 (or COX6A1), COX6B1 (or COX6B2), COX6C, COX7A1 (or COX7A2), COX7B, COX7C, COX8B and NDUFA4, which are encoded in the nuclear genome. The complex exists as a monomer or a dimer and forms supercomplexes (SCs) in the inner mitochondrial membrane with NADH-ubiquinone oxidoreductase (complex I, CI) and ubiquinol-cytochrome c oxidoreductase (cytochrome b-c1 complex, complex III, CIII), resulting in different assemblies (supercomplex SCI(1)III(2)IV(1) and megacomplex MCI(2)III(2)IV(2)).

The protein localises to the mitochondrion inner membrane. Its pathway is energy metabolism; oxidative phosphorylation. Its function is as follows. Component of the cytochrome c oxidase, the last enzyme in the mitochondrial electron transport chain which drives oxidative phosphorylation. The respiratory chain contains 3 multisubunit complexes succinate dehydrogenase (complex II, CII), ubiquinol-cytochrome c oxidoreductase (cytochrome b-c1 complex, complex III, CIII) and cytochrome c oxidase (complex IV, CIV), that cooperate to transfer electrons derived from NADH and succinate to molecular oxygen, creating an electrochemical gradient over the inner membrane that drives transmembrane transport and the ATP synthase. Cytochrome c oxidase is the component of the respiratory chain that catalyzes the reduction of oxygen to water. Electrons originating from reduced cytochrome c in the intermembrane space (IMS) are transferred via the dinuclear copper A center (CU(A)) of subunit 2 and heme A of subunit 1 to the active site in subunit 1, a binuclear center (BNC) formed by heme A3 and copper B (CU(B)). The BNC reduces molecular oxygen to 2 water molecules using 4 electrons from cytochrome c in the IMS and 4 protons from the mitochondrial matrix. This chain is Cytochrome c oxidase subunit 6C (COX6C), found in Bos taurus (Bovine).